The following is a 604-amino-acid chain: Nuclear factor erythroid 2-related factor 2 (604 aa).

The DLG motif signature appears at 29–31 (DLG). Ser-40 carries the post-translational modification Phosphoserine; by PKC. An ETGE motif motif is present at residues 79 to 82 (ETGE). Position 214 is a phosphoserine (Ser-214). The tract at residues 334–447 (TVEFNDSDSG…VPFTKDKHSS (114 aa)) is disordered. Polar residues-rich tracts occupy residues 340–352 (SDSGISLNTSPSR) and 395–407 (PTHSSGDTVQPLS). Lys-461, Lys-471, and Lys-486 each carry an N-linked (Glc) (glycation) lysine glycan. The bZIP domain occupies 496–559 (LIRDIRRRGK…HLLKRKLSTL (64 aa)). The N-linked (Glc) (glycation) arginine glycan is linked to Arg-498. Residues 498-517 (RDIRRRGKNKVAAQNCRKRK) form a basic motif region. The tract at residues 521–528 (IVELEQDL) is leucine-zipper. N-linked (Glc) (glycation) arginine glycosylation occurs at Arg-568. Residues 570–604 (EDGKPYSPSEYSLQQTRDGNVFLVPKSKKPDTKKN) are disordered. Lys-573 carries N-linked (Glc) (glycation) lysine glycosylation. Residues 578-587 (SEYSLQQTRD) are compositionally biased toward polar residues. Residues 590 to 595 (VFLVPK) form a mediates interaction with CHD6 and is necessary to activate transcription region. N6-acetyllysine; by CREBBP is present on residues Lys-595 and Lys-598.

The protein belongs to the bZIP family. CNC subfamily. As to quaternary structure, heterodimer; heterodimerizes with small Maf proteins. Interacts (via the bZIP domain) with MAFG and MAFK; required for binding to antioxidant response elements (AREs) on DNA. Interacts with KEAP1; the interaction is direct and promotes ubiquitination by the BCR(KEAP1) E3 ubiquitin ligase complex. Forms a ternary complex with PGAM5 and KEAP1. Interacts with EEF1D at heat shock promoter elements (HSE). Interacts via its leucine-zipper domain with the coiled-coil domain of PMF1. Interacts with CHD6; involved in activation of the transcription. Interacts with ESRRB; represses NFE2L2 transcriptional activity. Interacts with MOTS-c, a peptide produced by the mitochondrially encoded 12S rRNA MT-RNR1; the interaction occurs in the nucleus following metabolic stress. Post-translationally, ubiquitinated in the cytoplasm by the BCR(KEAP1) E3 ubiquitin ligase complex leading to its degradation. In response to oxidative stress, electrophile metabolites, such as sulforaphane, modify KEAP1, leading to inhibit activity of the BCR(KEAP1) complex, promoting NFE2L2/NRF2 nuclear accumulation and activity. In response to autophagy, the BCR(KEAP1) complex is inactivated. In terms of processing, phosphorylated by EIF2AK3/PERK following unfolded protein response (UPR), promoting dissociation from its cytoplasmic inhibitor KEAP1, followed by its translocation into the nucleus. Phosphorylation of Ser-40 by PKC in response to oxidative stress dissociates NFE2L2 from its cytoplasmic inhibitor KEAP1, promoting its translocation into the nucleus. Acetylation at Lys-595 and Lys-598 increases nuclear localization whereas deacetylation by SIRT1 enhances cytoplasmic presence. Post-translationally, glycation impairs transcription factor activity by preventing heterodimerization with small Maf proteins. Deglycation by FN3K restores activity.

It localises to the cytoplasm. Its subcellular location is the cytosol. The protein resides in the nucleus. Its function is as follows. Transcription factor that plays a key role in the response to oxidative stress: binds to antioxidant response (ARE) elements present in the promoter region of many cytoprotective genes, such as phase 2 detoxifying enzymes, and promotes their expression, thereby neutralizing reactive electrophiles. In normal conditions, ubiquitinated and degraded in the cytoplasm by the BCR(KEAP1) complex. In response to oxidative stress, electrophile metabolites inhibit activity of the BCR(KEAP1) complex, promoting nuclear accumulation of NFE2L2/NRF2, heterodimerization with one of the small Maf proteins and binding to ARE elements of cytoprotective target genes. The NFE2L2/NRF2 pathway is also activated in response to selective autophagy: autophagy promotes interaction between KEAP1 and SQSTM1/p62 and subsequent inactivation of the BCR(KEAP1) complex, leading to NFE2L2/NRF2 nuclear accumulation and expression of cytoprotective genes. The NFE2L2/NRF2 pathway is also activated during the unfolded protein response (UPR), contributing to redox homeostasis and cell survival following endoplasmic reticulum stress. May also be involved in the transcriptional activation of genes of the beta-globin cluster by mediating enhancer activity of hypersensitive site 2 of the beta-globin locus control region. Also plays an important role in the regulation of the innate immune response. It is a critical regulator of the innate immune response and survival during sepsis by maintaining redox homeostasis and restraint of the dysregulation of pro-inflammatory signaling pathways like MyD88-dependent and -independent and TNF-alpha signaling. Suppresses macrophage inflammatory response by blocking pro-inflammatory cytokine transcription and the induction of IL6. Binds to the proximity of pro-inflammatory genes in macrophages and inhibits RNA Pol II recruitment. The inhibition is independent of the Nrf2-binding motif and reactive oxygen species level. Represses antiviral cytosolic DNA sensing by suppressing the expression of the adapter protein STING1 and decreasing responsiveness to STING1 agonists while increasing susceptibility to infection with DNA viruses. This Rattus norvegicus (Rat) protein is Nuclear factor erythroid 2-related factor 2.